A 319-amino-acid chain; its full sequence is Ribosomal RNA small subunit methyltransferase H (319 aa).

S-adenosyl-L-methionine is bound by residues 39-41 (GGH), Asp59, Phe83, Asp104, and Gln111.

It belongs to the methyltransferase superfamily. RsmH family.

The protein resides in the cytoplasm. It catalyses the reaction cytidine(1402) in 16S rRNA + S-adenosyl-L-methionine = N(4)-methylcytidine(1402) in 16S rRNA + S-adenosyl-L-homocysteine + H(+). Functionally, specifically methylates the N4 position of cytidine in position 1402 (C1402) of 16S rRNA. This is Ribosomal RNA small subunit methyltransferase H from Ralstonia pickettii (strain 12D).